Reading from the N-terminus, the 66-residue chain is DNA-directed RNA polymerase subunit omega (66 aa).

The protein belongs to the RNA polymerase subunit omega family. In terms of assembly, the RNAP catalytic core consists of 2 alpha, 1 beta, 1 beta' and 1 omega subunit. When a sigma factor is associated with the core the holoenzyme is formed, which can initiate transcription.

It carries out the reaction RNA(n) + a ribonucleoside 5'-triphosphate = RNA(n+1) + diphosphate. In terms of biological role, promotes RNA polymerase assembly. Latches the N- and C-terminal regions of the beta' subunit thereby facilitating its interaction with the beta and alpha subunits. This chain is DNA-directed RNA polymerase subunit omega, found in Bacillus licheniformis (strain ATCC 14580 / DSM 13 / JCM 2505 / CCUG 7422 / NBRC 12200 / NCIMB 9375 / NCTC 10341 / NRRL NRS-1264 / Gibson 46).